A 240-amino-acid chain; its full sequence is Caffeoyl-CoA O-methyltransferase 5 (240 aa).

Residue lysine 14 participates in substrate binding. S-adenosyl-L-methionine contacts are provided by residues threonine 56, glutamate 78, 80–81 (GV), serine 86, aspartate 104, and alanine 133. Aspartate 156 contributes to the substrate binding site. Residue aspartate 156 participates in a divalent metal cation binding. Aspartate 158 is a binding site for S-adenosyl-L-methionine. Positions 182 and 183 each coordinate a divalent metal cation. Substrate is bound at residue asparagine 187.

This sequence belongs to the class I-like SAM-binding methyltransferase superfamily. Cation-dependent O-methyltransferase family. CCoAMT subfamily. Mg(2+) serves as cofactor. As to expression, expression steadily increases from the bottom to the top of the plant.

It carries out the reaction (E)-caffeoyl-CoA + S-adenosyl-L-methionine = (E)-feruloyl-CoA + S-adenosyl-L-homocysteine + H(+). It functions in the pathway aromatic compound metabolism; phenylpropanoid biosynthesis. Its function is as follows. Methylates caffeoyl-CoA to feruloyl-CoA and 5-hydroxyferuloyl-CoA to sinapoyl-CoA. Plays a role in the synthesis of feruloylated polysaccharides. Involved in the reinforcement of the plant cell wall. Also involved in the responding to wounding or pathogen challenge by the increased formation of cell wall-bound ferulic acid polymers. Methylates 5-hydroxyferulolyl-CoA more efficiently than caffeoyl-CoA. The chain is Caffeoyl-CoA O-methyltransferase 5 (CCOAOMT5) from Nicotiana tabacum (Common tobacco).